The sequence spans 417 residues: Tryptophan synthase beta chain (417 aa).

N6-(pyridoxal phosphate)lysine is present on lysine 108.

Belongs to the TrpB family. In terms of assembly, tetramer of two alpha and two beta chains. Requires pyridoxal 5'-phosphate as cofactor.

It catalyses the reaction (1S,2R)-1-C-(indol-3-yl)glycerol 3-phosphate + L-serine = D-glyceraldehyde 3-phosphate + L-tryptophan + H2O. The protein operates within amino-acid biosynthesis; L-tryptophan biosynthesis; L-tryptophan from chorismate: step 5/5. In terms of biological role, the beta subunit is responsible for the synthesis of L-tryptophan from indole and L-serine. In Mycobacterium leprae (strain TN), this protein is Tryptophan synthase beta chain (trpB).